The sequence spans 41 residues: Competence-stimulating peptide type 1 (41 aa).

Positions 1–24 are excised as a propeptide; that stretch reads MKNTVKLEQFVALKEKDLQKIKGG.

Belongs to the ComC family.

It localises to the secreted. Its function is as follows. Acts as a pheromone, induces cells to develop competence for genetic transformation. The protein is Competence-stimulating peptide type 1 (comC1) of Streptococcus pneumoniae.